A 386-amino-acid chain; its full sequence is Methionine import ATP-binding protein MetN 2 (386 aa).

Residues Val32–Leu272 form the ABC transporter domain. Position 69-76 (Gly69–Ser76) interacts with ATP.

The protein belongs to the ABC transporter superfamily. Methionine importer (TC 3.A.1.24) family. As to quaternary structure, the complex is composed of two ATP-binding proteins (MetN), two transmembrane proteins (MetI) and a solute-binding protein (MetQ).

The protein resides in the cell inner membrane. It carries out the reaction L-methionine(out) + ATP + H2O = L-methionine(in) + ADP + phosphate + H(+). The catalysed reaction is D-methionine(out) + ATP + H2O = D-methionine(in) + ADP + phosphate + H(+). Functionally, part of the ABC transporter complex MetNIQ involved in methionine import. Responsible for energy coupling to the transport system. This Paraburkholderia xenovorans (strain LB400) protein is Methionine import ATP-binding protein MetN 2.